Reading from the N-terminus, the 122-residue chain is Large ribosomal subunit protein bL12 (122 aa).

Belongs to the bacterial ribosomal protein bL12 family. In terms of assembly, homodimer. Part of the ribosomal stalk of the 50S ribosomal subunit. Forms a multimeric L10(L12)X complex, where L10 forms an elongated spine to which 2 to 4 L12 dimers bind in a sequential fashion. Binds GTP-bound translation factors.

In terms of biological role, forms part of the ribosomal stalk which helps the ribosome interact with GTP-bound translation factors. Is thus essential for accurate translation. The protein is Large ribosomal subunit protein bL12 of Streptococcus thermophilus (strain ATCC BAA-491 / LMD-9).